A 144-amino-acid polypeptide reads, in one-letter code: Prefoldin subunit alpha (144 aa).

This sequence belongs to the prefoldin alpha subunit family. As to quaternary structure, heterohexamer of two alpha and four beta subunits.

Its subcellular location is the cytoplasm. In terms of biological role, molecular chaperone capable of stabilizing a range of proteins. Seems to fulfill an ATP-independent, HSP70-like function in archaeal de novo protein folding. The chain is Prefoldin subunit alpha from Metallosphaera sedula (strain ATCC 51363 / DSM 5348 / JCM 9185 / NBRC 15509 / TH2).